A 284-amino-acid polypeptide reads, in one-letter code: Tropomyosin Tod p 1.0102 (284 aa).

Positions 15-273 (KEVATDKAEQ…KERYKSISDE (259 aa)) form a coiled coil. The disordered stretch occupies residues 103–136 (EERLTSAQSKLEDASKAADESERGRKVLENRSQG).

The protein belongs to the tropomyosin family. In terms of assembly, homodimer. In terms of processing, the N-terminus is blocked. As to expression, expressed in mantle muscle (at protein level).

Functionally, tropomyosin, in association with the troponin complex, plays a central role in the calcium dependent regulation of muscle contraction. The chain is Tropomyosin Tod p 1.0102 from Todarodes pacificus (Japanese flying squid).